A 164-amino-acid polypeptide reads, in one-letter code: Large ribosomal subunit protein uL15 (164 aa).

Residues 1-52 (MSLSKLKAPKGANRERTRVGRGQGSGLGKTAGRGGKGQKARSGNMHFEGFEG) are disordered. Residues 21–37 (RGQGSGLGKTAGRGGKG) show a composition bias toward gly residues.

This sequence belongs to the universal ribosomal protein uL15 family. In terms of assembly, part of the 50S ribosomal subunit.

Binds to the 23S rRNA. The protein is Large ribosomal subunit protein uL15 of Anaeromyxobacter sp. (strain Fw109-5).